The sequence spans 550 residues: Dihydroxy-acid dehydratase (550 aa).

Position 78 (aspartate 78) interacts with Mg(2+). Cysteine 119 is a binding site for [2Fe-2S] cluster. Mg(2+) is bound by residues aspartate 120 and lysine 121. At lysine 121 the chain carries N6-carboxylysine. Cysteine 192 is a binding site for [2Fe-2S] cluster. Glutamate 440 contributes to the Mg(2+) binding site. The active-site Proton acceptor is serine 466.

Belongs to the IlvD/Edd family. In terms of assembly, homodimer. Requires [2Fe-2S] cluster as cofactor. Mg(2+) serves as cofactor.

The catalysed reaction is (2R)-2,3-dihydroxy-3-methylbutanoate = 3-methyl-2-oxobutanoate + H2O. The enzyme catalyses (2R,3R)-2,3-dihydroxy-3-methylpentanoate = (S)-3-methyl-2-oxopentanoate + H2O. Its pathway is amino-acid biosynthesis; L-isoleucine biosynthesis; L-isoleucine from 2-oxobutanoate: step 3/4. It functions in the pathway amino-acid biosynthesis; L-valine biosynthesis; L-valine from pyruvate: step 3/4. Its function is as follows. Functions in the biosynthesis of branched-chain amino acids. Catalyzes the dehydration of (2R,3R)-2,3-dihydroxy-3-methylpentanoate (2,3-dihydroxy-3-methylvalerate) into 2-oxo-3-methylpentanoate (2-oxo-3-methylvalerate) and of (2R)-2,3-dihydroxy-3-methylbutanoate (2,3-dihydroxyisovalerate) into 2-oxo-3-methylbutanoate (2-oxoisovalerate), the penultimate precursor to L-isoleucine and L-valine, respectively. This is Dihydroxy-acid dehydratase from Thermodesulfovibrio yellowstonii (strain ATCC 51303 / DSM 11347 / YP87).